The following is a 90-amino-acid chain: Co-chaperonin GroES (90 aa).

This sequence belongs to the GroES chaperonin family. As to quaternary structure, heptamer of 7 subunits arranged in a ring. Interacts with the chaperonin GroEL.

It is found in the cytoplasm. Its function is as follows. Together with the chaperonin GroEL, plays an essential role in assisting protein folding. The GroEL-GroES system forms a nano-cage that allows encapsulation of the non-native substrate proteins and provides a physical environment optimized to promote and accelerate protein folding. GroES binds to the apical surface of the GroEL ring, thereby capping the opening of the GroEL channel. The polypeptide is Co-chaperonin GroES (Bacteroides thetaiotaomicron (strain ATCC 29148 / DSM 2079 / JCM 5827 / CCUG 10774 / NCTC 10582 / VPI-5482 / E50)).